A 225-amino-acid chain; its full sequence is Mediator of RNA polymerase II transcription subunit 8 (225 aa).

The interval 1–24 (MNSIHSANSNTVSTSEINTSQIPT) is disordered. The stretch at 170–204 (VEELKYLDSEDEKKETEENKKIENQKYEEELKITA) forms a coiled coil.

It belongs to the Mediator complex subunit 8 family. As to quaternary structure, component of the Mediator complex.

Its subcellular location is the nucleus. In terms of biological role, component of the Mediator complex, a coactivator involved in the regulated transcription of nearly all RNA polymerase II-dependent genes. Mediator functions as a bridge to convey information from gene-specific regulatory proteins to the basal RNA polymerase II transcription machinery. Mediator is recruited to promoters by direct interactions with regulatory proteins and serves as a scaffold for the assembly of a functional preinitiation complex with RNA polymerase II and the general transcription factors. This is Mediator of RNA polymerase II transcription subunit 8 (MED8) from Debaryomyces hansenii (strain ATCC 36239 / CBS 767 / BCRC 21394 / JCM 1990 / NBRC 0083 / IGC 2968) (Yeast).